The primary structure comprises 364 residues: tRNA 2-selenouridine synthase (364 aa).

Residues 14–137 enclose the Rhodanese domain; that stretch reads LLADTPLIDV…LRQTAIQATW (124 aa). The S-selanylcysteine intermediate role is filled by Cys97.

Belongs to the SelU family. Monomer.

The enzyme catalyses 5-methylaminomethyl-2-thiouridine(34) in tRNA + selenophosphate + (2E)-geranyl diphosphate + H2O + H(+) = 5-methylaminomethyl-2-selenouridine(34) in tRNA + (2E)-thiogeraniol + phosphate + diphosphate. It carries out the reaction 5-methylaminomethyl-2-thiouridine(34) in tRNA + (2E)-geranyl diphosphate = 5-methylaminomethyl-S-(2E)-geranyl-thiouridine(34) in tRNA + diphosphate. It catalyses the reaction 5-methylaminomethyl-S-(2E)-geranyl-thiouridine(34) in tRNA + selenophosphate + H(+) = 5-methylaminomethyl-2-(Se-phospho)selenouridine(34) in tRNA + (2E)-thiogeraniol. The catalysed reaction is 5-methylaminomethyl-2-(Se-phospho)selenouridine(34) in tRNA + H2O = 5-methylaminomethyl-2-selenouridine(34) in tRNA + phosphate. Functionally, involved in the post-transcriptional modification of the uridine at the wobble position (U34) of tRNA(Lys), tRNA(Glu) and tRNA(Gln). Catalyzes the conversion of 2-thiouridine (S2U-RNA) to 2-selenouridine (Se2U-RNA). Acts in a two-step process involving geranylation of 2-thiouridine (S2U) to S-geranyl-2-thiouridine (geS2U) and subsequent selenation of the latter derivative to 2-selenouridine (Se2U) in the tRNA chain. In Salmonella dublin (strain CT_02021853), this protein is tRNA 2-selenouridine synthase.